We begin with the raw amino-acid sequence, 143 residues long: Transcriptional regulator MraZ (143 aa).

SpoVT-AbrB domains follow at residues 5-47 (TYEP…SAEE) and 76-119 (ASDE…DAAA).

Belongs to the MraZ family. In terms of assembly, forms oligomers.

The protein localises to the cytoplasm. It localises to the nucleoid. This is Transcriptional regulator MraZ from Kocuria rhizophila (strain ATCC 9341 / DSM 348 / NBRC 103217 / DC2201).